A 132-amino-acid chain; its full sequence is Extracellular small neutral protease (132 aa).

Asp76 and Thr78 together coordinate Ca(2+). Zn(2+) is bound at residue His83. The active site involves Glu84. Zn(2+) contacts are provided by His87 and Asp93. Cys99 and Cys112 are joined by a disulfide.

This sequence belongs to the peptidase M7 family. Ca(2+) serves as cofactor. Requires Zn(2+) as cofactor.

It is found in the secreted. It carries out the reaction Hydrolyzes proteins with a preference for Tyr or Phe in the P1' position. Has no action on amino-acid p-nitroanilides.. Its function is as follows. Specifically hydrolyzes the peptide bond at the imino side of aromatic residues. The polypeptide is Extracellular small neutral protease (snpA) (Streptomyces caespitosus).